Consider the following 111-residue polypeptide: Cell division protein FtsB (111 aa).

At 1–3 (MRL) the chain is on the cytoplasmic side. A helical membrane pass occupies residues 4–21 (ITLFLLLLLLAIQYPLWL). Over 22 to 111 (GKGGWLRVWD…PPPAGQQAHH (90 aa)) the chain is Periplasmic. Positions 31 to 64 (DMQKQVTAQNQRNAELKQRNTKLEGEVKDLKEGT) form a coiled coil. Positions 89 to 111 (APAPKTSETPLPPPPPAGQQAHH) are disordered.

This sequence belongs to the FtsB family. Part of a complex composed of FtsB, FtsL and FtsQ.

It localises to the cell inner membrane. Its function is as follows. Essential cell division protein. May link together the upstream cell division proteins, which are predominantly cytoplasmic, with the downstream cell division proteins, which are predominantly periplasmic. In Ralstonia pickettii (strain 12J), this protein is Cell division protein FtsB.